Here is a 218-residue protein sequence, read N- to C-terminus: Adenylate kinase (218 aa).

10-15 (GVGKGT) is an ATP binding site. Residues 30-59 (STGDMLRSAIKQGTELGLKAKSFIDKGELV) are NMP. Residues T31, R36, 57–59 (ELV), 86–89 (GFPR), and Q93 each bind AMP. The interval 127–164 (GRRIAPSTGKVYHVVYNPPKVEGKCDETGEDLIIREDD) is LID. Residues R128 and 137–138 (VY) contribute to the ATP site. 2 residues coordinate AMP: R161 and R172. Q200 provides a ligand contact to ATP.

This sequence belongs to the adenylate kinase family. Monomer.

The protein localises to the cytoplasm. It catalyses the reaction AMP + ATP = 2 ADP. It participates in purine metabolism; AMP biosynthesis via salvage pathway; AMP from ADP: step 1/1. Its function is as follows. Catalyzes the reversible transfer of the terminal phosphate group between ATP and AMP. Plays an important role in cellular energy homeostasis and in adenine nucleotide metabolism. This is Adenylate kinase from Chloroherpeton thalassium (strain ATCC 35110 / GB-78).